Consider the following 457-residue polypeptide: Bifunctional protein GlmU (457 aa).

Residues 1–229 (MYNCAIILAA…YEEIMGVNSR (229 aa)) form a pyrophosphorylase region. UDP-N-acetyl-alpha-D-glucosamine contacts are provided by residues 8–11 (LAAG), Lys22, Gln73, and 78–79 (GT). Residue Asp103 participates in Mg(2+) binding. Residues Gly140, Glu155, Asn170, and Asn227 each coordinate UDP-N-acetyl-alpha-D-glucosamine. Asn227 contributes to the Mg(2+) binding site. Residues 230-250 (VQLSEAEIVMRKRINHKHMVN) form a linker region. Positions 251 to 457 (GVTFIDCEST…WLDKKGLLKK (207 aa)) are N-acetyltransferase. Positions 332 and 350 each coordinate UDP-N-acetyl-alpha-D-glucosamine. The Proton acceptor role is filled by His362. Tyr365 and Asn376 together coordinate UDP-N-acetyl-alpha-D-glucosamine. Acetyl-CoA contacts are provided by residues 385 to 386 (NY), Ala422, and Arg439.

In the N-terminal section; belongs to the N-acetylglucosamine-1-phosphate uridyltransferase family. It in the C-terminal section; belongs to the transferase hexapeptide repeat family. Homotrimer. The cofactor is Mg(2+).

It is found in the cytoplasm. The enzyme catalyses alpha-D-glucosamine 1-phosphate + acetyl-CoA = N-acetyl-alpha-D-glucosamine 1-phosphate + CoA + H(+). It carries out the reaction N-acetyl-alpha-D-glucosamine 1-phosphate + UTP + H(+) = UDP-N-acetyl-alpha-D-glucosamine + diphosphate. Its pathway is nucleotide-sugar biosynthesis; UDP-N-acetyl-alpha-D-glucosamine biosynthesis; N-acetyl-alpha-D-glucosamine 1-phosphate from alpha-D-glucosamine 6-phosphate (route II): step 2/2. It functions in the pathway nucleotide-sugar biosynthesis; UDP-N-acetyl-alpha-D-glucosamine biosynthesis; UDP-N-acetyl-alpha-D-glucosamine from N-acetyl-alpha-D-glucosamine 1-phosphate: step 1/1. It participates in bacterial outer membrane biogenesis; LPS lipid A biosynthesis. Functionally, catalyzes the last two sequential reactions in the de novo biosynthetic pathway for UDP-N-acetylglucosamine (UDP-GlcNAc). The C-terminal domain catalyzes the transfer of acetyl group from acetyl coenzyme A to glucosamine-1-phosphate (GlcN-1-P) to produce N-acetylglucosamine-1-phosphate (GlcNAc-1-P), which is converted into UDP-GlcNAc by the transfer of uridine 5-monophosphate (from uridine 5-triphosphate), a reaction catalyzed by the N-terminal domain. The protein is Bifunctional protein GlmU of Clostridium botulinum (strain ATCC 19397 / Type A).